A 783-amino-acid chain; its full sequence is DNA repair and recombination protein RAD54-like (783 aa).

A required for chromatin remodeling, strand pairing activities and coupling of ATPase activity region spans residues 2–9 (RRSLAPSQ). Thr-22 carries the post-translational modification Phosphothreonine. The Helicase ATP-binding domain maps to 165–340 (EGKRGNFNGC…FSLVNFVNPE (176 aa)). Residue 178 to 185 (DEMGLGKT) participates in ATP binding. The DEGH box motif lies at 291-294 (DEGH). Residues 497–654 (LLDFMLAAIR…NNESSEKHFT (158 aa)) form the Helicase C-terminal domain. The interval 737–783 (AESKPAAITEDDESEQQQQSPKRTSKNDDNDEDFDPENSAEEQFLGF) is disordered. Over residues 765-776 (DNDEDFDPENSA) the composition is skewed to acidic residues.

Belongs to the SNF2/RAD54 helicase family. Interacts (via N-terminus) with spn-A/Rad51.

It is found in the nucleus. Involved in mitotic DNA repair and meiotic recombination. Functions in the recombinational DNA repair pathway. Essential for interhomolog gene conversion (GC), but may have a less important role in intersister GC than spn-A/Rad51. In the presence of DNA, spn-A/Rad51 enhances the ATPase activity of okr/Rad54. The protein is DNA repair and recombination protein RAD54-like of Drosophila mojavensis (Fruit fly).